A 476-amino-acid polypeptide reads, in one-letter code: Bifunctional protein HldE (476 aa).

The tract at residues 1–319 is ribokinase; sequence MKISLPAFEK…EALSLSHGES (319 aa). 195–198 lines the ATP pocket; the sequence is NMSE. Aspartate 264 is an active-site residue. Residues 345–476 are cytidylyltransferase; sequence MTNGCFDILH…AIIQNIMANQ (132 aa).

The protein in the N-terminal section; belongs to the carbohydrate kinase PfkB family. In the C-terminal section; belongs to the cytidylyltransferase family. As to quaternary structure, homodimer.

It catalyses the reaction D-glycero-beta-D-manno-heptose 7-phosphate + ATP = D-glycero-beta-D-manno-heptose 1,7-bisphosphate + ADP + H(+). The enzyme catalyses D-glycero-beta-D-manno-heptose 1-phosphate + ATP + H(+) = ADP-D-glycero-beta-D-manno-heptose + diphosphate. It functions in the pathway nucleotide-sugar biosynthesis; ADP-L-glycero-beta-D-manno-heptose biosynthesis; ADP-L-glycero-beta-D-manno-heptose from D-glycero-beta-D-manno-heptose 7-phosphate: step 1/4. The protein operates within nucleotide-sugar biosynthesis; ADP-L-glycero-beta-D-manno-heptose biosynthesis; ADP-L-glycero-beta-D-manno-heptose from D-glycero-beta-D-manno-heptose 7-phosphate: step 3/4. In terms of biological role, catalyzes the phosphorylation of D-glycero-D-manno-heptose 7-phosphate at the C-1 position to selectively form D-glycero-beta-D-manno-heptose-1,7-bisphosphate. Its function is as follows. Catalyzes the ADP transfer from ATP to D-glycero-beta-D-manno-heptose 1-phosphate, yielding ADP-D-glycero-beta-D-manno-heptose. This chain is Bifunctional protein HldE, found in Shewanella pealeana (strain ATCC 700345 / ANG-SQ1).